The sequence spans 506 residues: MISAIEPKNLLRPHSQPVVTTSTLQPDDECNIELRIEDTTVDKYPAKQHARRVAAEIHRDRGLVYLMGQKSTLYEDSDQERTFRQRRYFFYMSGVDEPDCDLTYDINADKLTLYVPDFDLKRTIWMGPTLGREEALQRFDIDEVKYQSSLDEDVKQWAQNQGRGSTLYLLHESQKPAEKVPNVFIDSKTLKHAMDTSRAIKDEHEIGLIRRANEVSAAAHIDVLRGIRKMSNERDIEASFLNTSVSLGAHKQAYHIIAASGSNAATLHYSKNNEPLKGRQFVCLDAGAEWNCYASDVTRTFPMTSQWPSAEAKHIYKLVEHMQESCIVRVKEGVRYLDLHILAHRSLIRGFLTLGIFKGGTLEEIQNSGASNLFFPHGLGHHIGLEVHDVSPESIMAQDNGDYSDNVLISPNNLSPCTTSSPTLKSGMVVTIEPGIYFSQIALDNAKPEQLKYVDLELVKTYMPVGGVRIEDDILVTKTGYENLTTAPKGDGMLEIIRQGDGSCNI.

Residues Asp285, Asp296, Glu433, and Glu471 each contribute to the Mn(2+) site.

This sequence belongs to the peptidase M24B family. The cofactor is Mn(2+).

It carries out the reaction Release of any N-terminal amino acid, including proline, that is linked to proline, even from a dipeptide or tripeptide.. Catalyzes the removal of a penultimate prolyl residue from the N-termini of peptides. The chain is Probable Xaa-Pro aminopeptidase BDCG_04966 from Ajellomyces dermatitidis (strain ER-3 / ATCC MYA-2586) (Blastomyces dermatitidis).